The following is a 356-amino-acid chain: UDP-N-acetylglucosamine--N-acetylmuramyl-(pentapeptide) pyrophosphoryl-undecaprenol N-acetylglucosamine transferase (356 aa).

UDP-N-acetyl-alpha-D-glucosamine is bound by residues Ser-198 and Gln-289.

This sequence belongs to the glycosyltransferase 28 family. MurG subfamily.

The protein resides in the cell membrane. The catalysed reaction is Mur2Ac(oyl-L-Ala-gamma-D-Glu-L-Lys-D-Ala-D-Ala)-di-trans,octa-cis-undecaprenyl diphosphate + UDP-N-acetyl-alpha-D-glucosamine = beta-D-GlcNAc-(1-&gt;4)-Mur2Ac(oyl-L-Ala-gamma-D-Glu-L-Lys-D-Ala-D-Ala)-di-trans,octa-cis-undecaprenyl diphosphate + UDP + H(+). It participates in cell wall biogenesis; peptidoglycan biosynthesis. In terms of biological role, cell wall formation. Catalyzes the transfer of a GlcNAc subunit on undecaprenyl-pyrophosphoryl-MurNAc-pentapeptide (lipid intermediate I) to form undecaprenyl-pyrophosphoryl-MurNAc-(pentapeptide)GlcNAc (lipid intermediate II). This is UDP-N-acetylglucosamine--N-acetylmuramyl-(pentapeptide) pyrophosphoryl-undecaprenol N-acetylglucosamine transferase from Streptococcus thermophilus (strain CNRZ 1066).